The chain runs to 145 residues: Large ribosomal subunit protein uL13 (145 aa).

The protein belongs to the universal ribosomal protein uL13 family. As to quaternary structure, part of the 50S ribosomal subunit.

Functionally, this protein is one of the early assembly proteins of the 50S ribosomal subunit, although it is not seen to bind rRNA by itself. It is important during the early stages of 50S assembly. The chain is Large ribosomal subunit protein uL13 from Haloquadratum walsbyi (strain DSM 16790 / HBSQ001).